We begin with the raw amino-acid sequence, 77 residues long: Large ribosomal subunit protein eL20 (77 aa).

The protein belongs to the eukaryotic ribosomal protein eL20 family. Part of the 50S ribosomal subunit. Binds 23S rRNA.

This chain is Large ribosomal subunit protein eL20, found in Thermococcus kodakarensis (strain ATCC BAA-918 / JCM 12380 / KOD1) (Pyrococcus kodakaraensis (strain KOD1)).